Here is a 415-residue protein sequence, read N- to C-terminus: N-succinylarginine dihydrolase (415 aa).

Substrate-binding positions include 18-27 (AGLSRGNIAS), asparagine 100, and 127-128 (HR). Glutamate 161 is an active-site residue. Substrate is bound at residue arginine 193. The active site involves histidine 229. Substrate-binding residues include aspartate 231 and asparagine 340. Residue cysteine 346 is the Nucleophile of the active site.

Belongs to the succinylarginine dihydrolase family. Homodimer.

The catalysed reaction is N(2)-succinyl-L-arginine + 2 H2O + 2 H(+) = N(2)-succinyl-L-ornithine + 2 NH4(+) + CO2. Its pathway is amino-acid degradation; L-arginine degradation via AST pathway; L-glutamate and succinate from L-arginine: step 2/5. Its function is as follows. Catalyzes the hydrolysis of N(2)-succinylarginine into N(2)-succinylornithine, ammonia and CO(2). The sequence is that of N-succinylarginine dihydrolase from Sphingopyxis alaskensis (strain DSM 13593 / LMG 18877 / RB2256) (Sphingomonas alaskensis).